The sequence spans 64 residues: Large ribosomal subunit protein bL33 (64 aa).

Belongs to the bacterial ribosomal protein bL33 family.

In Prochlorococcus marinus (strain MIT 9313), this protein is Large ribosomal subunit protein bL33.